Reading from the N-terminus, the 443-residue chain is Probable glycine dehydrogenase (decarboxylating) subunit 1 (443 aa).

Belongs to the GcvP family. N-terminal subunit subfamily. The glycine cleavage system is composed of four proteins: P, T, L and H. In this organism, the P 'protein' is a heterodimer of two subunits.

It carries out the reaction N(6)-[(R)-lipoyl]-L-lysyl-[glycine-cleavage complex H protein] + glycine + H(+) = N(6)-[(R)-S(8)-aminomethyldihydrolipoyl]-L-lysyl-[glycine-cleavage complex H protein] + CO2. The glycine cleavage system catalyzes the degradation of glycine. The P protein binds the alpha-amino group of glycine through its pyridoxal phosphate cofactor; CO(2) is released and the remaining methylamine moiety is then transferred to the lipoamide cofactor of the H protein. This Endomicrobium trichonymphae protein is Probable glycine dehydrogenase (decarboxylating) subunit 1.